The following is a 636-amino-acid chain: Probable potassium transport system protein Kup (636 aa).

12 consecutive transmembrane segments (helical) span residues 22-42 (LGLLVAAVGVVYGDIGTSPLY), 64-84 (ILSLILWSLLWVVSFKYVMFI), 115-135 (LMVICGLIGASLFYGDSMITP), 150-170 (FDGIDHWVVPISLVVLVALFL), 182-202 (LFGPIMVTWFVVLGALGVHGI), 220-240 (FFVVHPGMGVAILGAVVLALT), 261-281 (WFILVLPALVLNYFGQGALLL), 293-313 (LLAPSWALLPLVGLATMATVI), 351-371 (IYIGAVNWTLMVGVVLLVIGF), 383-403 (VAVTGTMLMTTILVSAVMLLL), 408-428 (PVLAVPLLMGFLFVDGLFFAA), and 433-453 (IVQGGAFPVLAGGVLFLLMST).

Belongs to the HAK/KUP transporter (TC 2.A.72) family.

The protein localises to the cell inner membrane. It catalyses the reaction K(+)(in) + H(+)(in) = K(+)(out) + H(+)(out). Functionally, transport of potassium into the cell. Likely operates as a K(+):H(+) symporter. This chain is Probable potassium transport system protein Kup, found in Pseudomonas putida (strain GB-1).